A 540-amino-acid polypeptide reads, in one-letter code: Light-independent protochlorophyllide reductase subunit B (540 aa).

Asp-36 contacts [4Fe-4S] cluster. Catalysis depends on Asp-292, which acts as the Proton donor. 428-429 is a substrate binding site; the sequence is GL. Positions 451-490 are disordered; the sequence is SNVASGVEPSTPSVSSEVSASSSASPEASAPTPSPDGDMV. Low complexity predominate over residues 457–481; it reads VEPSTPSVSSEVSASSSASPEASAP.

This sequence belongs to the ChlB/BchB/BchZ family. As to quaternary structure, protochlorophyllide reductase is composed of three subunits; BchL, BchN and BchB. Forms a heterotetramer of two BchB and two BchN subunits. Requires [4Fe-4S] cluster as cofactor.

The enzyme catalyses chlorophyllide a + oxidized 2[4Fe-4S]-[ferredoxin] + 2 ADP + 2 phosphate = protochlorophyllide a + reduced 2[4Fe-4S]-[ferredoxin] + 2 ATP + 2 H2O. It functions in the pathway porphyrin-containing compound metabolism; bacteriochlorophyll biosynthesis (light-independent). In terms of biological role, component of the dark-operative protochlorophyllide reductase (DPOR) that uses Mg-ATP and reduced ferredoxin to reduce ring D of protochlorophyllide (Pchlide) to form chlorophyllide a (Chlide). This reaction is light-independent. The NB-protein (BchN-BchB) is the catalytic component of the complex. This is Light-independent protochlorophyllide reductase subunit B from Chlorobium chlorochromatii (strain CaD3).